The chain runs to 282 residues: 4-diphosphocytidyl-2-C-methyl-D-erythritol kinase (282 aa).

The active site involves lysine 11. An ATP-binding site is contributed by proline 95–serine 105. Aspartate 137 is an active-site residue.

The protein belongs to the GHMP kinase family. IspE subfamily.

The enzyme catalyses 4-CDP-2-C-methyl-D-erythritol + ATP = 4-CDP-2-C-methyl-D-erythritol 2-phosphate + ADP + H(+). It participates in isoprenoid biosynthesis; isopentenyl diphosphate biosynthesis via DXP pathway; isopentenyl diphosphate from 1-deoxy-D-xylulose 5-phosphate: step 3/6. Catalyzes the phosphorylation of the position 2 hydroxy group of 4-diphosphocytidyl-2C-methyl-D-erythritol. In Haemophilus ducreyi (strain 35000HP / ATCC 700724), this protein is 4-diphosphocytidyl-2-C-methyl-D-erythritol kinase.